The sequence spans 348 residues: DnaJ homolog subfamily B member 5 (348 aa).

The region spanning 4–68 is the J domain; it reads DYYKILGIPS…KKRSLYDQYG (65 aa).

The chain is DnaJ homolog subfamily B member 5 (Dnajb5) from Mus musculus (Mouse).